The sequence spans 331 residues: Beta-ketoacyl-[acyl-carrier-protein] synthase III (331 aa).

Active-site residues include Cys-115 and His-255. Residues Gln-256–Arg-260 are ACP-binding. The active site involves Asn-285.

Belongs to the thiolase-like superfamily. FabH family. Homodimer.

It is found in the cytoplasm. The catalysed reaction is malonyl-[ACP] + acetyl-CoA + H(+) = 3-oxobutanoyl-[ACP] + CO2 + CoA. The protein operates within lipid metabolism; fatty acid biosynthesis. Catalyzes the condensation reaction of fatty acid synthesis by the addition to an acyl acceptor of two carbons from malonyl-ACP. Catalyzes the first condensation reaction which initiates fatty acid synthesis and may therefore play a role in governing the total rate of fatty acid production. Possesses both acetoacetyl-ACP synthase and acetyl transacylase activities. Its substrate specificity determines the biosynthesis of branched-chain and/or straight-chain of fatty acids. This chain is Beta-ketoacyl-[acyl-carrier-protein] synthase III, found in Helicobacter pylori (strain J99 / ATCC 700824) (Campylobacter pylori J99).